Here is a 253-residue protein sequence, read N- to C-terminus: 3-deoxy-manno-octulosonate cytidylyltransferase (253 aa).

The protein belongs to the KdsB family.

It localises to the cytoplasm. It carries out the reaction 3-deoxy-alpha-D-manno-oct-2-ulosonate + CTP = CMP-3-deoxy-beta-D-manno-octulosonate + diphosphate. The protein operates within nucleotide-sugar biosynthesis; CMP-3-deoxy-D-manno-octulosonate biosynthesis; CMP-3-deoxy-D-manno-octulosonate from 3-deoxy-D-manno-octulosonate and CTP: step 1/1. It functions in the pathway bacterial outer membrane biogenesis; lipopolysaccharide biosynthesis. In terms of biological role, activates KDO (a required 8-carbon sugar) for incorporation into bacterial lipopolysaccharide in Gram-negative bacteria. The polypeptide is 3-deoxy-manno-octulosonate cytidylyltransferase (Acinetobacter baumannii (strain AYE)).